The chain runs to 213 residues: MKKLLKQSLLGFALVSMTGAAFADAQSVAELQRRLEQVSQYSADFDQTVRSSKGKQIQSGKGKFQVKRPNLFRMDTKSPQENLIVSDGANLWFYDSFVSQVTVNTVQDAVNNTPFVLLTSSDKSHWDQYDVTQNADTFVLKPKSKKSNLKQFDVRIDQSGMLKGFSTIERDGQSNLYVLRNITGGGVSSDLFKFSVPKGAELDDQRGGKKSKK.

The N-terminal stretch at 1-23 is a signal peptide; it reads MKKLLKQSLLGFALVSMTGAAFA.

Belongs to the LolA family. In terms of assembly, monomer.

The protein resides in the periplasm. Its function is as follows. Participates in the translocation of lipoproteins from the inner membrane to the outer membrane. Only forms a complex with a lipoprotein if the residue after the N-terminal Cys is not an aspartate (The Asp acts as a targeting signal to indicate that the lipoprotein should stay in the inner membrane). This chain is Outer-membrane lipoprotein carrier protein, found in Actinobacillus pleuropneumoniae serotype 3 (strain JL03).